Consider the following 505-residue polypeptide: Cytochrome P450 4Z1 (505 aa).

Residues 1–9 (MEPSWLQEL) are Cytoplasmic-facing. The chain crosses the membrane as a helical; Signal-anchor for type II membrane protein span at residues 10-30 (MAHPFLLLILLCMSLLLFQVI). Topologically, residues 31-505 (RLYQRRRWMI…GIHVFAKKVC (475 aa)) are lumenal. Position 452 (Cys452) interacts with heme.

It belongs to the cytochrome P450 family. Requires heme as cofactor. As to expression, preferentially detected in breast carcinoma tissue and mammary gland, whereas only marginal expression is found in all other tested tissues.

Its subcellular location is the endoplasmic reticulum membrane. It localises to the microsome membrane. It catalyses the reaction an organic molecule + reduced [NADPH--hemoprotein reductase] + O2 = an alcohol + oxidized [NADPH--hemoprotein reductase] + H2O + H(+). The catalysed reaction is dodecanoate + reduced [NADPH--hemoprotein reductase] + O2 = 7-hydroxydodecanoate + oxidized [NADPH--hemoprotein reductase] + H2O + H(+). It carries out the reaction dodecanoate + reduced [NADPH--hemoprotein reductase] + O2 = 8-hydroxydodecanoate + oxidized [NADPH--hemoprotein reductase] + H2O + H(+). The enzyme catalyses dodecanoate + reduced [NADPH--hemoprotein reductase] + O2 = 9-hydroxydodecanoate + oxidized [NADPH--hemoprotein reductase] + H2O + H(+). It catalyses the reaction dodecanoate + reduced [NADPH--hemoprotein reductase] + O2 = 10-hydroxydodecanoate + oxidized [NADPH--hemoprotein reductase] + H2O + H(+). The catalysed reaction is dodecanoate + reduced [NADPH--hemoprotein reductase] + O2 = 11-hydroxydodecanoate + oxidized [NADPH--hemoprotein reductase] + H2O + H(+). It carries out the reaction tetradecanoate + reduced [NADPH--hemoprotein reductase] + O2 = 9-hydroxytetradecanoate + oxidized [NADPH--hemoprotein reductase] + H2O + H(+). The enzyme catalyses tetradecanoate + reduced [NADPH--hemoprotein reductase] + O2 = 10-hydroxytetradecanoate + oxidized [NADPH--hemoprotein reductase] + H2O + H(+). It catalyses the reaction tetradecanoate + reduced [NADPH--hemoprotein reductase] + O2 = 11-hydroxytetradecanoate + oxidized [NADPH--hemoprotein reductase] + H2O + H(+). The catalysed reaction is tetradecanoate + reduced [NADPH--hemoprotein reductase] + O2 = 12-hydroxytetradecanoate + oxidized [NADPH--hemoprotein reductase] + H2O + H(+). It carries out the reaction (5Z,8Z,11Z,14Z)-eicosatetraenoate + reduced [NADPH--hemoprotein reductase] + O2 = (14S,15R)-epoxy-(5Z,8Z,11Z)-eicosatrienoate + oxidized [NADPH--hemoprotein reductase] + H2O + H(+). A cytochrome P450 monooxygenase that catalyzes the in-chain oxidation of fatty acids. Catalyzes the hydroxylation of carbon-hydrogen bonds. Hydroxylates lauric and myristic acids predominantly at the omega-4 and omega-2 positions, respectively. Catalyzes the epoxidation of double bonds of polyunsaturated fatty acids (PUFA). Displays an absolute stereoselectivity in the epoxidation of arachidonic acid producing the 14(S),15(R)-epoxyeicosatrienoic acid (EET) enantiomer. Mechanistically, uses molecular oxygen inserting one oxygen atom into a substrate, and reducing the second into a water molecule, with two electrons provided by NADPH via cytochrome P450 reductase (CPR; NADPH-ferrihemoprotein reductase). This Homo sapiens (Human) protein is Cytochrome P450 4Z1.